The primary structure comprises 509 residues: H/ACA ribonucleoprotein complex subunit DKC1 (509 aa).

A disordered region spans residues 1 to 25; the sequence is MADAEAAMTFPKKHKKKKERKPLPE. Ala-2 is modified (N-acetylalanine). A nucleolar localization region spans residues 2–22; sequence ADAEAAMTFPKKHKKKKERKP. Positions 11–20 are enriched in basic residues; sequence PKKHKKKKER. Residues Lys-21, Lys-40, and Lys-44 each participate in a glycyl lysine isopeptide (Lys-Gly) (interchain with G-Cter in SUMO2) cross-link. Residue Asp-126 is the Nucleophile of the active site. Residue Lys-192 forms a Glycyl lysine isopeptide (Lys-Gly) (interchain with G-Cter in SUMO2) linkage. The region spanning 297 to 372 is the PUA domain; that stretch reads HKRLVMKDSA…VVAKIKRVIM (76 aa). Positions 381–509 are disordered; it reads WGLGPKASQK…KARAAEELSG (129 aa). Ser-388 carries the phosphoserine modification. Glycyl lysine isopeptide (Lys-Gly) (interchain with G-Cter in SUMO2) cross-links involve residues Lys-395 and Lys-425. Basic and acidic residues predominate over residues 416–425; it reads DYVDYSDSSK. The tract at residues 447–509 is nuclear and nucleolar localization; that stretch reads KRKRDSDSDA…KARAAEELSG (63 aa). Ser-452 and Ser-454 each carry phosphoserine. A Phosphothreonine modification is found at Thr-460. Positions 466-475 are enriched in basic residues; it reads RVKKEKKKKK. A compositionally biased stretch (acidic residues) spans 481 to 490; sequence GEEAAEDGDG. At Ser-508 the chain carries Phosphoserine.

It belongs to the pseudouridine synthase TruB family. As to quaternary structure, part of the H/ACA small nucleolar ribonucleoprotein (H/ACA snoRNP) complex, which contains NHP2/NOLA2, GAR1/NOLA1, NOP10/NOLA3, and DKC1/NOLA4, which is presumed to be the catalytic subunit. The complex contains a stable core formed by binding of one or two NOP10-DKC1 heterodimers to NHP2; GAR1 subsequently binds to this core via DKC1. The complex binds a box H/ACA small nucleolar RNA (snoRNA), which may target the specific site of modification within the RNA substrate. During assembly, the complex contains NAF1 instead of GAR1/NOLA1. The complex also interacts with TERC, which contains a 3'-terminal domain related to the box H/ACA snoRNAs. Specific interactions with snoRNAs or TERC are mediated by GAR1 and NHP2. Associates with NOLC1/NOPP140. H/ACA snoRNPs interact with the SMN complex, consisting of SMN1 or SMN2, GEMIN2/SIP1, DDX20/GEMIN3, and GEMIN4. This is mediated by interaction between GAR1 and SMN1 or SMN2. The SMN complex may be required for correct assembly of the H/ACA snoRNP complex. Component of the telomerase holoenzyme complex composed of one molecule of TERT, one molecule of WRAP53/TCAB1, two molecules of H/ACA ribonucleoprotein complex subunits DKC1, NOP10, NHP2 and GAR1, and a telomerase RNA template component (TERC). The telomerase holoenzyme complex is associated with TEP1, SMG6/EST1A and POT1. Interacts with SHQ1; this interaction may lead to the stabilization of DKC1, from the time of its synthesis until its association with NOP10, NHP2, and NAF1 at the nascent H/ACA RNA. Interacts with HMBOX1. Interacts with DHX36.

The protein localises to the nucleus. Its subcellular location is the nucleolus. It is found in the cajal body. The enzyme catalyses uridine in 5S rRNA = pseudouridine in 5S rRNA. Its function is as follows. Catalytic subunit of H/ACA small nucleolar ribonucleoprotein (H/ACA snoRNP) complex, which catalyzes pseudouridylation of rRNA. This involves the isomerization of uridine such that the ribose is subsequently attached to C5, instead of the normal N1. Each rRNA can contain up to 100 pseudouridine ('psi') residues, which may serve to stabilize the conformation of rRNAs. Required for ribosome biogenesis and telomere maintenance. Also required for correct processing or intranuclear trafficking of TERC, the RNA component of the telomerase reverse transcriptase (TERT) holoenzyme. This chain is H/ACA ribonucleoprotein complex subunit DKC1 (Dkc1), found in Rattus norvegicus (Rat).